A 567-amino-acid polypeptide reads, in one-letter code: Proline--tRNA ligase (567 aa).

Belongs to the class-II aminoacyl-tRNA synthetase family. ProS type 1 subfamily. Homodimer.

It localises to the cytoplasm. It carries out the reaction tRNA(Pro) + L-proline + ATP = L-prolyl-tRNA(Pro) + AMP + diphosphate. Catalyzes the attachment of proline to tRNA(Pro) in a two-step reaction: proline is first activated by ATP to form Pro-AMP and then transferred to the acceptor end of tRNA(Pro). As ProRS can inadvertently accommodate and process non-cognate amino acids such as alanine and cysteine, to avoid such errors it has two additional distinct editing activities against alanine. One activity is designated as 'pretransfer' editing and involves the tRNA(Pro)-independent hydrolysis of activated Ala-AMP. The other activity is designated 'posttransfer' editing and involves deacylation of mischarged Ala-tRNA(Pro). The misacylated Cys-tRNA(Pro) is not edited by ProRS. The sequence is that of Proline--tRNA ligase from Stenotrophomonas maltophilia (strain R551-3).